The chain runs to 512 residues: Ankyrin repeat domain-containing protein SOWAHC (512 aa).

S82 and S125 each carry phosphoserine. The tract at residues 126-248 (LGLGGEVSDQ…AEEESSVGAS (123 aa)) is disordered. The span at 173 to 186 (PPQGEAEGGSSPSG) shows a compositional bias: low complexity. S205 carries the post-translational modification Phosphoserine. Residues 214 to 228 (PGDGNAGGRSRGGGD) are compositionally biased toward gly residues. Low complexity predominate over residues 229–248 (SDTASLASSSAEEESSVGAS). ANK repeat units lie at residues 288-317 (TGFT…KHQL) and 327-357 (GGYT…DVDI). The residue at position 395 (R395) is an Omega-N-methylarginine. Residues 427–500 (HVPEGWTGGS…EERSLRGYSS (74 aa)) are disordered. The span at 453–462 (MKPRLNKIRF) shows a compositional bias: basic residues. Residues 481-492 (EEGEEEEEEEEE) show a composition bias toward acidic residues.

The protein belongs to the SOWAH family.

The protein is Ankyrin repeat domain-containing protein SOWAHC (Sowahc) of Mus musculus (Mouse).